Consider the following 206-residue polypeptide: Cytidylate kinase (206 aa).

ATP is bound at residue Gly-9–Thr-17.

Belongs to the cytidylate kinase family. Type 1 subfamily.

It localises to the cytoplasm. The catalysed reaction is CMP + ATP = CDP + ADP. It carries out the reaction dCMP + ATP = dCDP + ADP. In Cereibacter sphaeroides (strain ATCC 17023 / DSM 158 / JCM 6121 / CCUG 31486 / LMG 2827 / NBRC 12203 / NCIMB 8253 / ATH 2.4.1.) (Rhodobacter sphaeroides), this protein is Cytidylate kinase.